A 427-amino-acid polypeptide reads, in one-letter code: Mucorpepsin (427 aa).

An N-terminal signal peptide occupies residues 1-22 (MLFSKISSAILLTAASFALTSA). Residues 23–66 (RPVSKQSDADDKLLALPLTSVNRKYSQTKHGQQAAEKLGGIKAF) constitute a propeptide, activation peptide. Residues 86–418 (YAIPVSIGTP…DFGKNRIGFA (333 aa)) enclose the Peptidase A1 domain. The active site involves Asp-104. A disulfide bond links Cys-117 and Cys-123. Asn-254 carries an N-linked (GlcNAc...) asparagine glycan. Asp-303 is a catalytic residue. Cys-338 and Cys-382 are joined by a disulfide.

This sequence belongs to the peptidase A1 family.

It carries out the reaction Hydrolysis of proteins, favoring hydrophobic residues at P1 and P1'. Clots milk. Does not accept Lys at P1, and hence does not activate trypsinogen.. Its function is as follows. This enzyme, capable of clotting milk is frequently used for cheese production. This chain is Mucorpepsin, found in Rhizomucor pusillus.